A 2273-amino-acid polypeptide reads, in one-letter code: Acetyl-CoA carboxylase, mitochondrial (2273 aa).

The N-terminal 104 residues, Lys1–Leu104, are a transit peptide targeting the mitochondrion. A Biotin carboxylation domain is found at Val134 to Leu635. The ATP-grasp domain occupies Lys292–Met484. ATP is bound at residue Gly332–Gly337. The active site involves Arg459. The Biotinyl-binding domain occupies Leu763 to Thr837. Lys804 carries the post-translational modification N6-biotinyllysine. In terms of domain architecture, CoA carboxyltransferase N-terminal spans Pro1532–Glu1867. Positions Pro1532–Lys2187 are carboxyltransferase. CoA contacts are provided by Arg1776, Lys2080, and Arg2082. Positions Arg1871 to Lys2187 constitute a CoA carboxyltransferase C-terminal domain.

Requires biotin as cofactor.

Its subcellular location is the mitochondrion. The catalysed reaction is hydrogencarbonate + acetyl-CoA + ATP = malonyl-CoA + ADP + phosphate + H(+). It carries out the reaction N(6)-biotinyl-L-lysyl-[protein] + hydrogencarbonate + ATP = N(6)-carboxybiotinyl-L-lysyl-[protein] + ADP + phosphate + H(+). The protein operates within lipid metabolism; malonyl-CoA biosynthesis; malonyl-CoA from acetyl-CoA: step 1/1. Catalyzes the rate-limiting reaction in the mitochondrial fatty acid synthesis (FAS) type II pathway. Responsible for the production of the mitochondrial malonyl-CoA, used for the biosynthesis of the cofactor lipoic acid. This protein carries three functions: biotin carboxyl carrier protein, biotin carboxylase, and carboxyltransferase. The chain is Acetyl-CoA carboxylase, mitochondrial (HFA1) from Saccharomyces cerevisiae (strain RM11-1a) (Baker's yeast).